Consider the following 446-residue polypeptide: N-succinylarginine dihydrolase (446 aa).

Substrate contacts are provided by residues 19–28 (AGLSFGNVAS), asparagine 110, and 137–138 (HR). Glutamate 174 is a catalytic residue. Arginine 213 is a binding site for substrate. Histidine 249 is an active-site residue. The substrate site is built by aspartate 251 and asparagine 364. Cysteine 370 functions as the Nucleophile in the catalytic mechanism.

This sequence belongs to the succinylarginine dihydrolase family. Homodimer.

It catalyses the reaction N(2)-succinyl-L-arginine + 2 H2O + 2 H(+) = N(2)-succinyl-L-ornithine + 2 NH4(+) + CO2. Its pathway is amino-acid degradation; L-arginine degradation via AST pathway; L-glutamate and succinate from L-arginine: step 2/5. In terms of biological role, catalyzes the hydrolysis of N(2)-succinylarginine into N(2)-succinylornithine, ammonia and CO(2). In Burkholderia ambifaria (strain MC40-6), this protein is N-succinylarginine dihydrolase.